The chain runs to 290 residues: Programmed cell death 1 ligand 1 (290 aa).

Residues 1 to 18 form the signal peptide; it reads MRIFAVFIFMTYWHLLNA. The 109-residue stretch at 19-127 folds into the Ig-like V-type domain; the sequence is FTVTVPKDLY…YGGADYKRIT (109 aa). The Extracellular portion of the chain corresponds to 19-238; the sequence is FTVTVPKDLY…LPLAHPPNER (220 aa). A glycan (N-linked (GlcNAc...) asparagine) is linked at N35. 2 disulfide bridges follow: C40-C114 and C155-C209. The region spanning 133–225 is the Ig-like C2-type domain; the sequence is PYNKINQRIL…PEENHTAELV (93 aa). N-linked (GlcNAc...) asparagine glycans are attached at residues N192, N200, and N219. A helical transmembrane segment spans residues 239–259; it reads THLVILGAILLCLGVALTFIF. Residues 260–290 lie on the Cytoplasmic side of the membrane; sequence RLRKGRMMDVKKCGIQDTNSKKQSDTHLEET.

This sequence belongs to the immunoglobulin superfamily. BTN/MOG family. As to quaternary structure, interacts with PDCD1. Interacts (via transmembrane domain) with CMTM4 and CMTM6. Interacts with (phosphorylated) STAT3; promoting nuclear translocation. Interacts with CD80. In terms of assembly, may form homomultimers. Ubiquitinated; STUB1 likely mediates polyubiquitination of PD-L1/CD274 triggering its degradation. Ubiquitinated by MARCHF8; leading to degradation. Deubiquitinated by USP22; leading to stabilization. Highly expressed in the heart, skeletal muscle, placenta and lung. Weakly expressed in the thymus, spleen, kidney and liver. Expressed on activated T- and B-cells, dendritic cells, keratinocytes and monocytes. As to expression, widely expressed, highest in lung, liver and pituitary and in various peripheral blood cells, including neutrophils and some subtypes of lymphoid and myeloid cells.

Its subcellular location is the cell membrane. It is found in the early endosome membrane. The protein localises to the recycling endosome membrane. It localises to the nucleus. The protein resides in the endomembrane system. Its subcellular location is the secreted. Its function is as follows. Plays a critical role in induction and maintenance of immune tolerance to self. As a ligand for the inhibitory receptor PDCD1/PD-1, modulates the activation threshold of T-cells and limits T-cell effector response. Through a yet unknown activating receptor, may costimulate T-cell subsets that predominantly produce interleukin-10 (IL10). Can also act as a transcription coactivator: in response to hypoxia, translocates into the nucleus via its interaction with phosphorylated STAT3 and promotes transcription of GSDMC, leading to pyroptosis. The PDCD1-mediated inhibitory pathway is exploited by tumors to attenuate anti-tumor immunity and escape destruction by the immune system, thereby facilitating tumor survival. The interaction with PDCD1/PD-1 inhibits cytotoxic T lymphocytes (CTLs) effector function. The blockage of the PDCD1-mediated pathway results in the reversal of the exhausted T-cell phenotype and the normalization of the anti-tumor response, providing a rationale for cancer immunotherapy. The protein is Programmed cell death 1 ligand 1 of Homo sapiens (Human).